The following is a 423-amino-acid chain: Gamma-glutamyl phosphate reductase (423 aa).

Belongs to the gamma-glutamyl phosphate reductase family.

Its subcellular location is the cytoplasm. It carries out the reaction L-glutamate 5-semialdehyde + phosphate + NADP(+) = L-glutamyl 5-phosphate + NADPH + H(+). The protein operates within amino-acid biosynthesis; L-proline biosynthesis; L-glutamate 5-semialdehyde from L-glutamate: step 2/2. Catalyzes the NADPH-dependent reduction of L-glutamate 5-phosphate into L-glutamate 5-semialdehyde and phosphate. The product spontaneously undergoes cyclization to form 1-pyrroline-5-carboxylate. The chain is Gamma-glutamyl phosphate reductase from Burkholderia thailandensis (strain ATCC 700388 / DSM 13276 / CCUG 48851 / CIP 106301 / E264).